The sequence spans 256 residues: Vesicle-associated protein 1-1 (256 aa).

The residue at position 1 (Met-1) is an N-acetylmethionine. Topologically, residues 1 to 232 (MSNIDLIGMS…RRESKKSQSG (232 aa)) are cytoplasmic. Residue Ser-2 is modified to N-acetylserine; in Vesicle-associated protein 1-1, N-terminally processed. Positions 22-142 (LLTVEPLDLQ…EETKLRVTYV (121 aa)) constitute an MSP domain. Positions 142 to 169 (VAPPRPPSPVHEGSEEGSSPRASVSDNG) are disordered. Phosphoserine is present on Ser-149. Residues 157 to 169 (EGSSPRASVSDNG) show a composition bias toward polar residues. Positions 187–232 (HQENTSEARALITKLTEEKQSAIQLNNRLQRELDQLRRESKKSQSG) form a coiled coil. The chain crosses the membrane as a helical; Anchor for type IV membrane protein span at residues 233-253 (GIPFMYVLLVGLIGLILGYIM).

Belongs to the VAMP-associated protein (VAP) (TC 9.B.17) family. Homodimer or homooligomer. Interacts with the cowpea mosaic virus (CPMV) NTP-binding protein (NTB). Interacts with NET3C.

Its subcellular location is the endoplasmic reticulum membrane. The protein localises to the protein storage vacuole membrane. Its function is as follows. Part of a membrane-cytoskeletal adapter complex that forms a bridge between the endoplasmic reticulum and the plasma membrane. Associates with microtubules. This Arabidopsis thaliana (Mouse-ear cress) protein is Vesicle-associated protein 1-1 (PVA11).